Reading from the N-terminus, the 249-residue chain is APKELQVSYAHKSSELVIGGDECDINEHPFLAFLYSRGNFCGLTLINQEWVLTAAHCDRRFMPIYLGIHTLSVPNDDEVIRYPKDNFICPNNNIIDEKDKDIMLIRLNRPVKNSEHIAPISLPSNLPSVGSVCRVMGWGSITAPNDTFPDVPHCANINLFNDTVCHGAYKRFPVKSRTLCAGVLQGGKDKCMGDSGGPLICNGPFHGILFWGDDPCALPRKPALYTKGFEYPPWIQSIIAKNTTETCPP.

A signal peptide spans 1 to 10 (APKELQVSYA). The propeptide occupies 11 to 16 (HKSSEL). Residues 17 to 240 (VIGGDECDIN…YPPWIQSIIA (224 aa)) form the Peptidase S1 domain. 6 disulfide bridges follow: Cys-23/Cys-154, Cys-41/Cys-57, Cys-89/Cys-247, Cys-133/Cys-201, Cys-165/Cys-180, and Cys-191/Cys-216. Residues His-56 and Asp-101 each act as charge relay system in the active site. N-linked (GlcNAc...) asparagine glycosylation is found at Asn-145 and Asn-161. The Charge relay system role is filled by Ser-195. A glycan (N-linked (GlcNAc...) asparagine) is linked at Asn-242.

This sequence belongs to the peptidase S1 family. Snake venom subfamily. Monomer. Glycoprotein, contains approx. 52% carbohydrate which could be removed by N-glycosidase. Glycosylation is important, since deglycosylated barnettobin loses its clotting and defibrinogenating effects. Expressed by the venom gland.

It localises to the secreted. With respect to regulation, both coagulant and amidolytic activities are inhibited by PMSF. Amidolytic activity is partially inhibited by DTT, chymostatin, SBTI and TLCK, but not by heparin and EDTA. Thrombin-like snake venom serine protease that releases only fibrinopeptide A from human Aalpha chain of fibrinogen (specific coagulant activity was 251.7 NIH thrombin units/mg). Also shows fibrino(geno)lytic activities in vitro and defibrinogenating effects in vivo. This Bothrops barnetti (Barnett's lancehead) protein is Thrombin-like enzyme barnettobin.